The chain runs to 147 residues: uncharacterized protein (147 aa).

The protein belongs to the MG185/MG260 family.

This is an uncharacterized protein from Mycoplasma pneumoniae (strain ATCC 29342 / M129 / Subtype 1) (Mycoplasmoides pneumoniae).